Reading from the N-terminus, the 421-residue chain is MLFKSFALTLLFAAARVQAASNCSSGPYNISAQGTLDELNSCTVLNGDLYISDAGNSGITTLTVNGIESVQGDVVVSDGQYLTSLSFPSLKNVSGAFNVNNMIRMNNLATPELTSVGSLNLAVLPNLQELQFNAGLSDSDSVVIDDTQLQAIDGISLDSVTTFQVTNNRYIQEITMEGLESAQNIQISANSKGVSVNFSKLSNVTTATFDGISNVFIGNLKSAAGNLYFSNTTLDNISVPYLTEIGQSFAVLYSPELTSLNFPNLTTVGGGFVINDTGLTSIDGFPVISEIGGGLVLLGNFSSIDMPDLSDVKGALTVETKATNFTCPWSNDDSVIKGDDFTCQGSVATISATSSYDLSSTVSATSGSATSATGSATTTSYSSDSSASSSSSSSHESSAASNGFTAGALVLGSLLVAALAM.

An N-terminal signal peptide occupies residues 1–19; sequence MLFKSFALTLLFAAARVQA. N-linked (GlcNAc...) asparagine glycosylation is found at N22, N29, N92, N197, N203, N231, N236, N264, N275, N300, and N324. Residues 365–394 form a disordered region; the sequence is TSGSATSATGSATTTSYSSDSSASSSSSSS. Residue S398 is the site of GPI-anchor amidated serine attachment. The propeptide at 399-421 is removed in mature form; sequence AASNGFTAGALVLGSLLVAALAM. A helical membrane pass occupies residues 401 to 421; that stretch reads SNGFTAGALVLGSLLVAALAM.

It belongs to the SPS2 family. Post-translationally, the GPI-anchor is attached to the protein in the endoplasmic reticulum and serves to target the protein to the cell surface. There, the glucosamine-inositol phospholipid moiety is cleaved off and the GPI-modified mannoprotein is covalently attached via its lipidless GPI glycan remnant to the 1,6-beta-glucan of the outer cell wall layer. Extensively N-glycosylated.

The protein localises to the cell membrane. It localises to the secreted. It is found in the cell wall. Functionally, involved in the negative feedback regulation of pmk1 cell integrity signaling and is linked to cellular calcium signaling. This chain is Cell wall protein ecm33 (ecm33), found in Schizosaccharomyces pombe (strain 972 / ATCC 24843) (Fission yeast).